The following is a 157-amino-acid chain: NADPH-dependent 7-cyano-7-deazaguanine reductase (157 aa).

The Thioimide intermediate role is filled by Cys56. Asp63 acts as the Proton donor in catalysis. Residues 78 to 80 and 97 to 98 contribute to the substrate site; these read VES and HE.

The protein belongs to the GTP cyclohydrolase I family. QueF type 1 subfamily.

The protein resides in the cytoplasm. It carries out the reaction 7-aminomethyl-7-carbaguanine + 2 NADP(+) = 7-cyano-7-deazaguanine + 2 NADPH + 3 H(+). The protein operates within tRNA modification; tRNA-queuosine biosynthesis. Catalyzes the NADPH-dependent reduction of 7-cyano-7-deazaguanine (preQ0) to 7-aminomethyl-7-deazaguanine (preQ1). The polypeptide is NADPH-dependent 7-cyano-7-deazaguanine reductase (Parabacteroides distasonis (strain ATCC 8503 / DSM 20701 / CIP 104284 / JCM 5825 / NCTC 11152)).